The following is a 328-amino-acid chain: L-lactate dehydrogenase (328 aa).

NAD(+) is bound by residues V18, E39, K46, Y71, and 85–86 (GA). Positions 88 and 94 each coordinate substrate. Residues S107, 124–126 (AAN), and S149 each bind NAD(+). A substrate-binding site is contributed by 126–129 (NPVD). 154 to 157 (DTAR) is a binding site for substrate. Beta-D-fructose 1,6-bisphosphate is bound by residues R159 and H174. H181 serves as the catalytic Proton acceptor. Phosphotyrosine is present on Y226. T235 lines the substrate pocket.

It belongs to the LDH/MDH superfamily. LDH family. As to quaternary structure, homotetramer.

It is found in the cytoplasm. The enzyme catalyses (S)-lactate + NAD(+) = pyruvate + NADH + H(+). It participates in fermentation; pyruvate fermentation to lactate; (S)-lactate from pyruvate: step 1/1. Its activity is regulated as follows. Allosterically activated by fructose 1,6-bisphosphate (FBP). In terms of biological role, catalyzes the conversion of lactate to pyruvate. This Streptococcus mutans serotype c (strain ATCC 700610 / UA159) protein is L-lactate dehydrogenase.